Consider the following 695-residue polypeptide: Elongation factor G (695 aa).

The 276-residue stretch at 10-285 folds into the tr-type G domain; it reads AKTRNIGIMA…AVIDYLPSPI (276 aa). Residues 19-26, 83-87, and 137-140 each bind GTP; these read AHIDAGKT, DTPGH, and NKMD.

This sequence belongs to the TRAFAC class translation factor GTPase superfamily. Classic translation factor GTPase family. EF-G/EF-2 subfamily.

The protein localises to the cytoplasm. In terms of biological role, catalyzes the GTP-dependent ribosomal translocation step during translation elongation. During this step, the ribosome changes from the pre-translocational (PRE) to the post-translocational (POST) state as the newly formed A-site-bound peptidyl-tRNA and P-site-bound deacylated tRNA move to the P and E sites, respectively. Catalyzes the coordinated movement of the two tRNA molecules, the mRNA and conformational changes in the ribosome. The sequence is that of Elongation factor G from Limosilactobacillus reuteri (strain DSM 20016) (Lactobacillus reuteri).